A 1111-amino-acid chain; its full sequence is Lysylphosphatidylglycerol biosynthesis bifunctional protein LysX (1111 aa).

A phosphatidylglycerol lysyltransferase region spans residues 1–612 (MTLTSPPRTR…VLHHDGTAPD (612 aa)). Transmembrane regions (helical) follow at residues 18 to 38 (VPAAAGWTVGVIATLSLIASV), 60 to 80 (FPDTSFAWAFVLALLAGALAA), 84 to 104 (IAWWILLLYMVAAVGWNVADL), 118 to 138 (VIGLAFHLAAVAFLLLARPLF), 152 to 172 (GVLAAGMAVGVLVGWGLLELF), 209 to 229 (VNALLGLFGALALMAAAIVLF), and 308 to 328 (AWLALCGTYGWAPGVMGASVG). The interval 613–1111 (MSGLRTDTAD…TLPFPLARPR (499 aa)) is lysine--tRNA ligase. The OB DNA-binding region spans 674-747 (VAGRVLRIRD…GTRSLLVRHW (74 aa)). Mg(2+)-binding residues include aspartate 1023 and glutamate 1030.

This sequence in the N-terminal section; belongs to the LPG synthetase family. It in the C-terminal section; belongs to the class-II aminoacyl-tRNA synthetase family. The cofactor is Mg(2+).

The protein resides in the cell membrane. The enzyme catalyses tRNA(Lys) + L-lysine + ATP = L-lysyl-tRNA(Lys) + AMP + diphosphate. It carries out the reaction L-lysyl-tRNA(Lys) + a 1,2-diacyl-sn-glycero-3-phospho-(1'-sn-glycerol) = a 1,2-diacyl-sn-glycero-3-phospho-1'-(3'-O-L-lysyl)-sn-glycerol + tRNA(Lys). In terms of biological role, catalyzes the production of L-lysyl-tRNA(Lys)transfer and the transfer of a lysyl group from L-lysyl-tRNA(Lys) to membrane-bound phosphatidylglycerol (PG), which produces lysylphosphatidylglycerol (LPG), one of the components of the bacterial membrane with a positive net charge. LPG synthesis contributes to the resistance to cationic antimicrobial peptides (CAMPs) and likely protects M.tuberculosis against the CAMPs produced by competiting microorganisms (bacteriocins). In fact, the modification of anionic phosphatidylglycerol with positively charged L-lysine results in repulsion of the peptides. This is Lysylphosphatidylglycerol biosynthesis bifunctional protein LysX (lysX) from Mycobacterium sp. (strain JLS).